The primary structure comprises 305 residues: Cyclin-dependent kinase 3 (305 aa).

Residues 4–286 (FQKVEKIGEG…AKTALAHPYF (283 aa)) enclose the Protein kinase domain. ATP contacts are provided by residues 10-18 (IGEGTYGVV) and Lys-33. The active-site Proton acceptor is the Asp-127.

Belongs to the protein kinase superfamily. CMGC Ser/Thr protein kinase family. CDC2/CDKX subfamily. Interacts with CABLES1 and CABLES2. Interacts with ATF1. Binding to CCNC/cyclin-C promotes RB1 phosphorylation. In terms of tissue distribution, expressed in cancer cell lines and glioblastoma tissue.

It carries out the reaction L-seryl-[protein] + ATP = O-phospho-L-seryl-[protein] + ADP + H(+). It catalyses the reaction L-threonyl-[protein] + ATP = O-phospho-L-threonyl-[protein] + ADP + H(+). Serine/threonine-protein kinase that plays a critical role in the control of the eukaryotic cell cycle; involved in G0-G1 and G1-S cell cycle transitions. Interacts with CCNC/cyclin-C during interphase. Phosphorylates histone H1, ATF1, RB1 and CABLES1. ATF1 phosphorylation triggers ATF1 transactivation and transcriptional activities, and promotes cell proliferation and transformation. CDK3/cyclin-C mediated RB1 phosphorylation is required for G0-G1 transition. Promotes G1-S transition probably by contributing to the activation of E2F1, E2F2 and E2F3 in a RB1-independent manner. The protein is Cyclin-dependent kinase 3 (CDK3) of Homo sapiens (Human).